A 334-amino-acid polypeptide reads, in one-letter code: Fructose-1,6-bisphosphatase class 1 (334 aa).

E91, D113, L115, and D116 together coordinate Mg(2+). Substrate-binding positions include 116-119, N208, and K274; that span reads DGSS. Residue E280 coordinates Mg(2+).

This sequence belongs to the FBPase class 1 family. In terms of assembly, homotetramer. Mg(2+) serves as cofactor.

The protein resides in the cytoplasm. It carries out the reaction beta-D-fructose 1,6-bisphosphate + H2O = beta-D-fructose 6-phosphate + phosphate. The protein operates within carbohydrate biosynthesis; gluconeogenesis. This Janthinobacterium sp. (strain Marseille) (Minibacterium massiliensis) protein is Fructose-1,6-bisphosphatase class 1.